Consider the following 70-residue polypeptide: MTTVKVKENEPFEIAMRRFKRSIEKTGLLTELRAREFYEKPTAVRKRKHAAAVKRTYKRLRSQMLPPKLY.

It belongs to the bacterial ribosomal protein bS21 family.

The protein is Small ribosomal subunit protein bS21 of Nitrosomonas eutropha (strain DSM 101675 / C91 / Nm57).